A 291-amino-acid chain; its full sequence is Transmembrane protein 41B (291 aa).

The disordered stretch occupies residues 1–39; sequence MAKGRVAERSQLGAHHTTPVGDGAAGTRGLAAPGSRDHQ. Position 18 is a phosphothreonine (threonine 18). Serine 35 is subject to Phosphoserine. The next 6 helical transmembrane spans lie at 52-72, 109-129, 147-169, 197-217, 225-245, and 262-282; these read MSLLILVSIFLSAAFVMFLVY, FYVQVLVAYFATYIFLQTFAI, LALFLVCLCSGLGASFCYMLSYL, LINYIIFLRITPFLPNWFINI, PLKVFFIGTFLGVAPPSFVAI, and SWNSIFILMILAVLSILPAIF. The VTT domain; required for its function in autophagy stretch occupies residues 140-251; the sequence is GFLYPFPLAL…FVAIKAGTTL (112 aa).

It belongs to the TMEM41 family. As to quaternary structure, interacts with VMP1. Interacts with COPA, COPB1, VDAC1 and ERLIN2. Interacts with ATG2A. Interacts with SURF4. (Microbial infection) Interacts with Zika virus NS4A protein and Yellow fever virus NS4B protein.

It is found in the endoplasmic reticulum membrane. It localises to the endomembrane system. Its subcellular location is the cytoplasm. It catalyses the reaction a 1,2-diacyl-sn-glycero-3-phospho-L-serine(in) = a 1,2-diacyl-sn-glycero-3-phospho-L-serine(out). The enzyme catalyses cholesterol(in) = cholesterol(out). The catalysed reaction is a 1,2-diacyl-sn-glycero-3-phosphocholine(in) = a 1,2-diacyl-sn-glycero-3-phosphocholine(out). It carries out the reaction a 1,2-diacyl-sn-glycero-3-phosphoethanolamine(in) = a 1,2-diacyl-sn-glycero-3-phosphoethanolamine(out). In terms of biological role, phospholipid scramblase involved in lipid homeostasis and membrane dynamics processes. Has phospholipid scramblase activity toward cholesterol and phosphatidylserine, as well as phosphatidylethanolamine and phosphatidylcholine. Required for autophagosome formation: participates in early stages of autophagosome biogenesis at the endoplasmic reticulum (ER) membrane by reequilibrating the leaflets of the ER as lipids are extracted by ATG2 (ATG2A or ATG2B) to mediate autophagosome assembly. In addition to autophagy, involved in other processes in which phospholipid scramblase activity is required. Required for normal motor neuron development. (Microbial infection) Critical host factor required for infection by human coronaviruses SARS-CoV-2, HCoV-OC43, HCoV-NL63, and HCoV-229E, as well as all flaviviruses tested such as Zika virus and Yellow fever virus. Required post-entry of the virus to facilitate the ER membrane remodeling necessary to form replication organelles. This is Transmembrane protein 41B from Homo sapiens (Human).